We begin with the raw amino-acid sequence, 1261 residues long: Structural maintenance of chromosomes protein 3 (1261 aa).

Coiled coils occupy residues 188–332 and 406–450; these read EKIQ…HSLQ and LIAD…YEMD. Positions 534 to 645 constitute an SMC hinge domain; sequence NGYYGTVIEL…IIVRTLDQAA (112 aa). 3 coiled-coil regions span residues 677-826, 857-930, and 1023-1085; these read KRSK…MDLM, NERR…DKIT, and RELE…ENRK. Residues 1159–1193 carry the DA-box motif; sequence LSGGQKSLVALAIIFSIQKCDPAPFYLFDEIDAAL.

The protein belongs to the SMC family. SMC3 subfamily. In terms of assembly, component of the cohesin complex, composed of the smc-1 and smc-3 heterodimer attached via their SMC hinge domain, scc-1 which links them, and scc-3. Interacts with scc-1, smc-1 and tim-1.

It is found in the nucleus. Its subcellular location is the chromosome. Involved in chromosome cohesion during cell cycle and in DNA repair. Involved in the repair of double strand breaks during mitosis and meiosis. Required for chromosome segregation during mitosis. Central component of cohesin complex. The cohesin complex is required for the cohesion of sister chromatids after DNA replication. The cohesin complex apparently forms a large proteinaceous ring within which sister chromatids can be trapped. At anaphase, the complex is cleaved and dissociates from chromatin, allowing sister chromatids to segregate. Required for the localization of lab-1 to meiotic and mitotic chromosomes. This chain is Structural maintenance of chromosomes protein 3, found in Caenorhabditis elegans.